Here is a 350-residue protein sequence, read N- to C-terminus: Purine-binding protein BAB2_0673 (350 aa).

Residues 1 to 17 form the signal peptide; sequence MVIATVAGFMLGGAAHA. 3 residues coordinate adenine: W36, W185, and D211.

This sequence belongs to the BMP lipoprotein family.

Functionally, binds adenine and probably also other purines, such as guanine. May play a role in adenine and guanine uptake. May be part of an ABC-type uptake system for adenine and similar ligands. The chain is Purine-binding protein BAB2_0673 from Brucella abortus (strain 2308).